We begin with the raw amino-acid sequence, 189 residues long: UPF0301 protein bbp_491 (189 aa).

This sequence belongs to the UPF0301 (AlgH) family.

This is UPF0301 protein bbp_491 from Buchnera aphidicola subsp. Baizongia pistaciae (strain Bp).